The sequence spans 57 residues: Large ribosomal subunit protein bL32 (57 aa).

A disordered region spans residues 1–37 (MAVQQNKPTRSKRGMRRSHDALTAVTSLSVDKTSGEK).

Belongs to the bacterial ribosomal protein bL32 family.

This is Large ribosomal subunit protein bL32 from Escherichia fergusonii (strain ATCC 35469 / DSM 13698 / CCUG 18766 / IAM 14443 / JCM 21226 / LMG 7866 / NBRC 102419 / NCTC 12128 / CDC 0568-73).